The primary structure comprises 150 residues: MGQYKIWVDADACPNPIKEILFRAAERKSLPLVLVANQMLRVPPSPYISQVRVGSGFDVADQYIVNHVEPTHLVITADIPLAAQVIEKGALALNPRGELYTTDNIRQKLTMRDFMEDLRSSGVHTGGPDALSAADKQAFANSLDKWLVRV.

This sequence belongs to the UPF0178 family.

This Shewanella sp. (strain ANA-3) protein is UPF0178 protein Shewana3_1627.